A 1358-amino-acid polypeptide reads, in one-letter code: Phosphoinositide 3-kinase regulatory subunit 4 (1358 aa).

The N-myristoyl glycine moiety is linked to residue Gly-2. Residues 26 to 324 (FEYDKSLGST…AFPEIFYTFL (299 aa)) enclose the Protein kinase domain. ATP-binding positions include 32–40 (LGSTRFFKV) and Lys-53. The active-site Proton acceptor is the Asp-148. HEAT repeat units follow at residues 413–450 (ILLDRITPYLLHFSNDSVPRVRAEALRTLTKVLALVQE), 458–495 (IYPEYILPGIAHLAQDDATIVRLAYAENIALLAETALR), 572–610 (KANDVLLSHMITFLNDKNDWHLRGAFFDSIVGVAAYVGW), and 612–648 (SSSILKPLLQQGLSDAEEFVIVKALNALTCMCQLGLL). Phosphoserine is present on residues Ser-808, Ser-813, Ser-853, and Ser-865. WD repeat units lie at residues 991 to 1030 (EHKSAVNRIRVSDEHLLFATCSNDGTVKIWNSQKMEGKTT), 1040 to 1079 (RIGGRVKTLTFCQGSHYLAIASDNGAVQLLGIEASKLPKS), 1093 to 1134 (KEDG…NAWT), 1139 to 1178 (LKSGLITSFAVDIHQCWLCIGTSSGAMACWDMRFQLPISS), 1182 to 1223 (PSRA…RRLT), and 1237 to 1278 (PSPH…RSYV). The interval 1307 to 1326 (KQKVGPSDDTPRRGPESLPV) is disordered. Positions 1315–1326 (DTPRRGPESLPV) are enriched in basic and acidic residues. A Phosphothreonine modification is found at Thr-1316. One copy of the WD 7 repeat lies at 1327–1358 (GHHDIITDIATFQTTQGFIVTASRDGIVKVWK).

It belongs to the protein kinase superfamily. Ser/Thr protein kinase family. Component of the PI3K (PI3KC3/PI3K-III/class III phosphatidylinositol 3-kinase) complex the core of which is composed of the catalytic subunit PIK3C3, the regulatory subunit PIK3R4 and BECN1 associating with additional regulatory/auxiliary subunits to form alternative complex forms. Alternative complex forms containing a fourth regulatory subunit in a mutually exclusive manner are PI3K complex I (PI3KC3-C1) containing ATG14, and PI3K complex II (PI3KC3-C2) containing UVRAG. PI3KC3-C1 displays a V-shaped architecture with PIK3R4 serving as a bridge between PIK3C3 and the ATG14:BECN1 subcomplex. Both, PI3KC3-C1 and PI3KC3-C2, can associate with further regulatory subunits, such as RUBCN, SH3GLB1/Bif-1, AMBRA1 and NRBF2. PI3KC3-C1 probably associates with PIK3CB. Interacts with RAB7A in the presence of PIK3C3/VPS34. Interacts with NRBF2. Interacts with ARMC3. It depends on Mn(2+) as a cofactor. Post-translationally, myristoylated. In terms of processing, probably autophosphorylated.

Its subcellular location is the late endosome. The protein localises to the cytoplasmic vesicle. It is found in the autophagosome. The protein resides in the membrane. The enzyme catalyses L-seryl-[protein] + ATP = O-phospho-L-seryl-[protein] + ADP + H(+). It catalyses the reaction L-threonyl-[protein] + ATP = O-phospho-L-threonyl-[protein] + ADP + H(+). Regulatory subunit of the PI3K complex that mediates formation of phosphatidylinositol 3-phosphate; different complex forms are believed to play a role in multiple membrane trafficking pathways: PI3KC3-C1 is involved in initiation of autophagosomes and PI3KC3-C2 in maturation of autophagosomes and endocytosis. Involved in regulation of degradative endocytic trafficking and cytokinesis, probably in the context of PI3KC3-C2. In Mus musculus (Mouse), this protein is Phosphoinositide 3-kinase regulatory subunit 4 (Pik3r4).